We begin with the raw amino-acid sequence, 405 residues long: Macrolide efflux protein A (405 aa).

11 consecutive transmembrane segments (helical) span residues 14–34 (IWAG…AIIF), 48–68 (MASL…GVLV), 76–98 (IMIG…AFYM), 145–165 (SLQS…YSVW), 168–188 (NAII…VAIV), 222–242 (FALL…NALF), 259–279 (ITEI…GLFG), 285–305 (ILLI…SGLL), 310–330 (FFIF…YSGV), 350–370 (LTGS…ALFA), and 373–393 (IGVN…AIVC).

The protein belongs to the major facilitator superfamily. Drug:H(+) antiporter-3 (DHA3) (TC 2.A.1.21) family.

Its subcellular location is the cell membrane. Confers resistance to 14-membered macrolides including erythromycin and to 15-membered macrolides but not to 16-membered macrolides, lincosamides or analogs of streptogramin B. May function as an efflux pump to regulate intracellular macrolide levels. The sequence is that of Macrolide efflux protein A from Streptococcus pyogenes serotype M6 (strain ATCC BAA-946 / MGAS10394).